The following is a 240-amino-acid chain: (DL)-glycerol-3-phosphatase 2 (240 aa).

The active-site Nucleophile is aspartate 20. Residues aspartate 20, aspartate 22, and aspartate 185 each coordinate Mg(2+). Residue aspartate 22 is the Proton donor of the active site.

This sequence belongs to the HAD-like hydrolase superfamily. DOG/GPP family. The cofactor is Mg(2+). In terms of tissue distribution, ubiquitous with highest expression in siliques. Mainly restricted to the meristem of immature flower and vascular elements of the root, shoot, leave, siliqua and developing embryo (at the protein level).

Its subcellular location is the cytoplasm. The enzyme catalyses sn-glycerol 1-phosphate + H2O = glycerol + phosphate. It catalyses the reaction sn-glycerol 3-phosphate + H2O = glycerol + phosphate. Functionally, acts as a glycerol-3-phosphatase with higher stereospecificity for L-glycerol-3-phosphate than DL-glycerol-3-phosphate. The protein is (DL)-glycerol-3-phosphatase 2 (GPP2) of Arabidopsis thaliana (Mouse-ear cress).